Here is a 132-residue protein sequence, read N- to C-terminus: Small ribosomal subunit protein uS8 (132 aa).

It belongs to the universal ribosomal protein uS8 family. In terms of assembly, part of the 30S ribosomal subunit. Contacts proteins S5 and S12.

One of the primary rRNA binding proteins, it binds directly to 16S rRNA central domain where it helps coordinate assembly of the platform of the 30S subunit. In Saccharopolyspora erythraea (strain ATCC 11635 / DSM 40517 / JCM 4748 / NBRC 13426 / NCIMB 8594 / NRRL 2338), this protein is Small ribosomal subunit protein uS8.